An 825-amino-acid chain; its full sequence is Lon protease (825 aa).

Positions 41-237 (LPIIFIPNTI…KVIQLLLEQK (197 aa)) constitute a Lon N-terminal domain. ATP is bound at residue 388-395 (GPPGTGKT). Positions 625-805 (SNPPGVVTGL…DEVLYEALGL (181 aa)) constitute a Lon proteolytic domain. Active-site residues include Ser711 and Lys754.

The protein belongs to the peptidase S16 family. In terms of assembly, homohexamer. Organized in a ring with a central cavity.

The protein localises to the cytoplasm. The catalysed reaction is Hydrolysis of proteins in presence of ATP.. Functionally, ATP-dependent serine protease that mediates the selective degradation of mutant and abnormal proteins as well as certain short-lived regulatory proteins. Required for cellular homeostasis and for survival from DNA damage and developmental changes induced by stress. Degrades polypeptides processively to yield small peptide fragments that are 5 to 10 amino acids long. Binds to DNA in a double-stranded, site-specific manner. This is Lon protease from Methanosphaera stadtmanae (strain ATCC 43021 / DSM 3091 / JCM 11832 / MCB-3).